Here is a 274-residue protein sequence, read N- to C-terminus: Thymidylate synthase (274 aa).

Residue R21 participates in dUMP binding. H51 is a binding site for (6R)-5,10-methylene-5,6,7,8-tetrahydrofolate. A dUMP-binding site is contributed by 123–124 (RR). The active-site Nucleophile is the C156. DUMP-binding positions include 176-179 (RSAD), N187, and 217-219 (HIY). D179 is a (6R)-5,10-methylene-5,6,7,8-tetrahydrofolate binding site. Residue S273 participates in (6R)-5,10-methylene-5,6,7,8-tetrahydrofolate binding.

It belongs to the thymidylate synthase family. Bacterial-type ThyA subfamily. Homodimer.

The protein localises to the cytoplasm. The catalysed reaction is dUMP + (6R)-5,10-methylene-5,6,7,8-tetrahydrofolate = 7,8-dihydrofolate + dTMP. The protein operates within pyrimidine metabolism; dTTP biosynthesis. Functionally, catalyzes the reductive methylation of 2'-deoxyuridine-5'-monophosphate (dUMP) to 2'-deoxythymidine-5'-monophosphate (dTMP) while utilizing 5,10-methylenetetrahydrofolate (mTHF) as the methyl donor and reductant in the reaction, yielding dihydrofolate (DHF) as a by-product. This enzymatic reaction provides an intracellular de novo source of dTMP, an essential precursor for DNA biosynthesis. The chain is Thymidylate synthase from Francisella tularensis subsp. tularensis (strain SCHU S4 / Schu 4).